The chain runs to 452 residues: Phosphoglucosamine mutase (452 aa).

Ser108 (phosphoserine intermediate) is an active-site residue. Positions 108, 247, 249, and 251 each coordinate Mg(2+). The residue at position 108 (Ser108) is a Phosphoserine.

This sequence belongs to the phosphohexose mutase family. Mg(2+) is required as a cofactor. Post-translationally, activated by phosphorylation.

It catalyses the reaction alpha-D-glucosamine 1-phosphate = D-glucosamine 6-phosphate. Catalyzes the conversion of glucosamine-6-phosphate to glucosamine-1-phosphate. This is Phosphoglucosamine mutase from Burkholderia thailandensis (strain ATCC 700388 / DSM 13276 / CCUG 48851 / CIP 106301 / E264).